Here is an 81-residue protein sequence, read N- to C-terminus: ATP synthase subunit c, chloroplastic (81 aa).

2 helical membrane-spanning segments follow: residues 4–24 and 57–77; these read VISA…SIGP and LAFM…LLFA.

Belongs to the ATPase C chain family. F-type ATPases have 2 components, F(1) - the catalytic core - and F(0) - the membrane proton channel. F(1) has five subunits: alpha(3), beta(3), gamma(1), delta(1), epsilon(1). F(0) has four main subunits: a(1), b(1), b'(1) and c(10-14). The alpha and beta chains form an alternating ring which encloses part of the gamma chain. F(1) is attached to F(0) by a central stalk formed by the gamma and epsilon chains, while a peripheral stalk is formed by the delta, b and b' chains.

It is found in the plastid. Its subcellular location is the chloroplast thylakoid membrane. F(1)F(0) ATP synthase produces ATP from ADP in the presence of a proton or sodium gradient. F-type ATPases consist of two structural domains, F(1) containing the extramembraneous catalytic core and F(0) containing the membrane proton channel, linked together by a central stalk and a peripheral stalk. During catalysis, ATP synthesis in the catalytic domain of F(1) is coupled via a rotary mechanism of the central stalk subunits to proton translocation. In terms of biological role, key component of the F(0) channel; it plays a direct role in translocation across the membrane. A homomeric c-ring of between 10-14 subunits forms the central stalk rotor element with the F(1) delta and epsilon subunits. This Zygnema circumcarinatum (Green alga) protein is ATP synthase subunit c, chloroplastic.